A 445-amino-acid chain; its full sequence is uncharacterized protein (445 aa).

The interval 139 to 160 (TESQKDLEYERKANKTKEENQQ) is disordered.

This is an uncharacterized protein from Mycoplasma pneumoniae (strain ATCC 29342 / M129 / Subtype 1) (Mycoplasmoides pneumoniae).